We begin with the raw amino-acid sequence, 475 residues long: tRNA-dihydrouridine(16/17) synthase [NAD(P)(+)]-like (475 aa).

FMN is bound by residues 23–25 and Q79; that span reads PMV. The Proton donor role is filled by C108. FMN-binding positions include K147, H175, 208 to 210, and 232 to 233; these read NGN and AE. Positions 343 to 388 are disordered; it reads GPREGSKENSGGRSKRALEEEEGSMEGLSKNKLKKQLRNPHKTFDP. Over residues 373-383 the composition is skewed to basic residues; the sequence is NKLKKQLRNPH.

This sequence belongs to the Dus family. Dus1 subfamily. FMN serves as cofactor.

It localises to the cytoplasm. The protein resides in the nucleus. The catalysed reaction is 5,6-dihydrouridine(16) in tRNA + NADP(+) = uridine(16) in tRNA + NADPH + H(+). The enzyme catalyses 5,6-dihydrouridine(16) in tRNA + NAD(+) = uridine(16) in tRNA + NADH + H(+). It carries out the reaction 5,6-dihydrouridine(17) in tRNA + NAD(+) = uridine(17) in tRNA + NADH + H(+). It catalyses the reaction 5,6-dihydrouridine(17) in tRNA + NADP(+) = uridine(17) in tRNA + NADPH + H(+). Catalyzes the synthesis of dihydrouridine, a modified base found in the D-loop of most tRNAs. Specifically modifies U16 and U17 in cytoplasmic tRNAs. Affects the level of some mature tRNA and thereby the total cellular translation. The polypeptide is tRNA-dihydrouridine(16/17) synthase [NAD(P)(+)]-like (Dus1l) (Mus musculus (Mouse)).